The chain runs to 187 residues: Photosystem I assembly protein Ycf4 (187 aa).

The next 2 helical transmembrane spans lie at 23 to 43 and 70 to 90; these read INYF…IVGI and FYGI…ILGV.

Belongs to the Ycf4 family.

The protein localises to the plastid. It is found in the chloroplast thylakoid membrane. In terms of biological role, seems to be required for the assembly of the photosystem I complex. The chain is Photosystem I assembly protein Ycf4 from Chara vulgaris (Common stonewort).